Consider the following 465-residue polypeptide: Kynureninase (465 aa).

Pyridoxal 5'-phosphate is bound by residues Leu-116, Thr-117, 144–147 (FPSD), Asp-231, His-234, and Tyr-256. An N6-(pyridoxal phosphate)lysine modification is found at Lys-257. Positions 291 and 319 each coordinate pyridoxal 5'-phosphate.

This sequence belongs to the kynureninase family. In terms of assembly, homodimer. Pyridoxal 5'-phosphate serves as cofactor.

The protein resides in the cytoplasm. The catalysed reaction is L-kynurenine + H2O = anthranilate + L-alanine + H(+). The enzyme catalyses 3-hydroxy-L-kynurenine + H2O = 3-hydroxyanthranilate + L-alanine + H(+). The protein operates within amino-acid degradation; L-kynurenine degradation; L-alanine and anthranilate from L-kynurenine: step 1/1. Its pathway is cofactor biosynthesis; NAD(+) biosynthesis; quinolinate from L-kynurenine: step 2/3. In terms of biological role, catalyzes the cleavage of L-kynurenine (L-Kyn) and L-3-hydroxykynurenine (L-3OHKyn) into anthranilic acid (AA) and 3-hydroxyanthranilic acid (3-OHAA), respectively. In Scheffersomyces stipitis (strain ATCC 58785 / CBS 6054 / NBRC 10063 / NRRL Y-11545) (Yeast), this protein is Kynureninase.